Reading from the N-terminus, the 33-residue chain is Cyanophlyctin-beta (33 aa).

Cys27 and Cys33 are joined by a disulfide.

As to expression, expressed by the skin glands.

Its subcellular location is the secreted. Its function is as follows. Antimicrobial peptide active against E.coli (MIC=5 uM), K.pneumoniae (MIC=10 uM), B.cereus (MIC=7 uM) and S.aureus (MIC=12 uM). Has very little hemolytic activity. The sequence is that of Cyanophlyctin-beta from Euphlyctis cyanophlyctis (Skittering frog).